The following is a 747-amino-acid chain: Phosphoribosylformylglycinamidine synthase subunit PurL (747 aa).

Residue His-46 is part of the active site. ATP is bound by residues Tyr-49 and Lys-88. Glu-90 contributes to the Mg(2+) binding site. Substrate-binding positions include 91 to 94 (SHNH) and Arg-113. The active-site Proton acceptor is His-92. Asp-114 provides a ligand contact to Mg(2+). Position 237 (Gln-237) interacts with substrate. Residue Asp-265 participates in Mg(2+) binding. 309-311 (ESQ) contacts substrate. Residues Asp-493 and Gly-530 each coordinate ATP. Asn-531 contributes to the Mg(2+) binding site. Residue Ser-533 coordinates substrate.

This sequence belongs to the FGAMS family. Monomer. Part of the FGAM synthase complex composed of 1 PurL, 1 PurQ and 2 PurS subunits.

The protein resides in the cytoplasm. It catalyses the reaction N(2)-formyl-N(1)-(5-phospho-beta-D-ribosyl)glycinamide + L-glutamine + ATP + H2O = 2-formamido-N(1)-(5-O-phospho-beta-D-ribosyl)acetamidine + L-glutamate + ADP + phosphate + H(+). The protein operates within purine metabolism; IMP biosynthesis via de novo pathway; 5-amino-1-(5-phospho-D-ribosyl)imidazole from N(2)-formyl-N(1)-(5-phospho-D-ribosyl)glycinamide: step 1/2. Its function is as follows. Part of the phosphoribosylformylglycinamidine synthase complex involved in the purines biosynthetic pathway. Catalyzes the ATP-dependent conversion of formylglycinamide ribonucleotide (FGAR) and glutamine to yield formylglycinamidine ribonucleotide (FGAM) and glutamate. The FGAM synthase complex is composed of three subunits. PurQ produces an ammonia molecule by converting glutamine to glutamate. PurL transfers the ammonia molecule to FGAR to form FGAM in an ATP-dependent manner. PurS interacts with PurQ and PurL and is thought to assist in the transfer of the ammonia molecule from PurQ to PurL. The polypeptide is Phosphoribosylformylglycinamidine synthase subunit PurL (Deinococcus radiodurans (strain ATCC 13939 / DSM 20539 / JCM 16871 / CCUG 27074 / LMG 4051 / NBRC 15346 / NCIMB 9279 / VKM B-1422 / R1)).